The following is a 369-amino-acid chain: 4-hydroxy-3-methylbut-2-en-1-yl diphosphate synthase (flavodoxin) (369 aa).

[4Fe-4S] cluster is bound by residues C270, C273, C305, and E312.

It belongs to the IspG family. [4Fe-4S] cluster serves as cofactor.

The catalysed reaction is (2E)-4-hydroxy-3-methylbut-2-enyl diphosphate + oxidized [flavodoxin] + H2O + 2 H(+) = 2-C-methyl-D-erythritol 2,4-cyclic diphosphate + reduced [flavodoxin]. It participates in isoprenoid biosynthesis; isopentenyl diphosphate biosynthesis via DXP pathway; isopentenyl diphosphate from 1-deoxy-D-xylulose 5-phosphate: step 5/6. Converts 2C-methyl-D-erythritol 2,4-cyclodiphosphate (ME-2,4cPP) into 1-hydroxy-2-methyl-2-(E)-butenyl 4-diphosphate. In Pseudomonas putida (strain GB-1), this protein is 4-hydroxy-3-methylbut-2-en-1-yl diphosphate synthase (flavodoxin).